Consider the following 454-residue polypeptide: Mitochondrial dynamics protein MID49 (454 aa).

Topologically, residues Met-1 to Asp-22 are mitochondrial intermembrane. Ser-13 carries the post-translational modification Phosphoserine. Residues Phe-23 to Ala-43 form a helical membrane-spanning segment. Residues Thr-44–Leu-454 lie on the Cytoplasmic side of the membrane. Residues Ala-76–Ser-119 form a disordered region. Over residues Ala-88–Pro-103 the composition is skewed to low complexity.

It belongs to the MID49/MID51 family. As to quaternary structure, interacts with DNM1L. In terms of tissue distribution, expressed in all tissues tested with highest expression in heart and skeletal muscle.

The protein localises to the mitochondrion outer membrane. Mitochondrial outer membrane protein involved in the regulation of mitochondrial organization. It is required for mitochondrial fission and promotes the recruitment and association of the fission mediator dynamin-related protein 1 (DNM1L) to the mitochondrial surface independently of the mitochondrial fission FIS1 and MFF proteins. Regulates DNM1L GTPase activity. The chain is Mitochondrial dynamics protein MID49 (MIEF2) from Homo sapiens (Human).